The following is a 275-amino-acid chain: Phosphate import ATP-binding protein PstB (275 aa).

One can recognise an ABC transporter domain in the interval 28–270 (IDCRDIRVFY…PREKRTEDYI (243 aa)). 60–67 (GPSGCGKS) is an ATP binding site.

The protein belongs to the ABC transporter superfamily. Phosphate importer (TC 3.A.1.7) family. The complex is composed of two ATP-binding proteins (PstB), two transmembrane proteins (PstC and PstA) and a solute-binding protein (PstS).

It is found in the cell inner membrane. It catalyses the reaction phosphate(out) + ATP + H2O = ADP + 2 phosphate(in) + H(+). Its function is as follows. Part of the ABC transporter complex PstSACB involved in phosphate import. Responsible for energy coupling to the transport system. This Hyphomonas neptunium (strain ATCC 15444) protein is Phosphate import ATP-binding protein PstB.